A 291-amino-acid chain; its full sequence is MELSEITRSTLVSTLSRLLRRHKESNPDFFLIRSKMFIGGLSWDTSKKDLTEYLSRFGEVLDCTIKTDPVTGRSRGFGFVLFKDAVSVDKVLETKEHKLDGKLIDPKRAKALQGKEPPKKVFVGGLSPETTEEQIKQYFGGFGEIENIELPMDTKTNERRGFCFVTYTDEEPVQKLLESRFHQIGTGKCEIKAAQPKEVYRQQQQKQQKGGRGGTRGRGRGQGYSNYYDQNYGGYGNNDSYGDQGYGGYDYSGYNYGNYGYNQGYTDYSGQQSTYGKARGGGNHQNNYQPY.

2 RRM domains span residues 34–116 (SKMF…QGKE) and 119–196 (KKVF…AAQP). The segment at 196-226 (PKEVYRQQQQKQQKGGRGGTRGRGRGQGYSN) is disordered. A compositionally biased stretch (gly residues) spans 210–222 (GGRGGTRGRGRGQ).

Its subcellular location is the nucleus. The protein resides in the cytoplasm. In terms of biological role, acts as a transcriptional regulator. Binds DNA and RNA. The protein is Heterogeneous nuclear ribonucleoprotein D-like-B (hnrnpdl-b) of Xenopus laevis (African clawed frog).